Consider the following 313-residue polypeptide: tRNA dimethylallyltransferase (313 aa).

Residue 11–18 (GPTAAGKS) participates in ATP binding. 13–18 (TAAGKS) is a substrate binding site. Interaction with substrate tRNA stretches follow at residues 36 to 39 (DSAT), 160 to 164 (QRIQR), and 244 to 249 (RCVGYR).

Belongs to the IPP transferase family. Monomer. Requires Mg(2+) as cofactor.

The enzyme catalyses adenosine(37) in tRNA + dimethylallyl diphosphate = N(6)-dimethylallyladenosine(37) in tRNA + diphosphate. In terms of biological role, catalyzes the transfer of a dimethylallyl group onto the adenine at position 37 in tRNAs that read codons beginning with uridine, leading to the formation of N6-(dimethylallyl)adenosine (i(6)A). This is tRNA dimethylallyltransferase from Bordetella parapertussis (strain 12822 / ATCC BAA-587 / NCTC 13253).